We begin with the raw amino-acid sequence, 268 residues long: Proenkephalin-A (268 aa).

Residues 1-24 (MARLLRLCTWLVALGPGLLATVQA) form the signal peptide. Cystine bridges form between C26-C48, C30-C52, and C33-C65. The segment at 163–184 (TGDDRDRENHHQEGGDSDEGVS) is disordered. Basic and acidic residues predominate over residues 164–176 (GDDRDRENHHQEG). 2 propeptides span residues 197 to 208 (SPQVEDEAKELQ) and 218 to 228 (VGRPEWWMDYQ). Residue S252 is modified to Phosphoserine.

It belongs to the opioid neuropeptide precursor family. In terms of processing, proenkephalin-A is cleaved by CTSL to generate Met-enkephalin. Processed and degraded by ACE. Post-translationally, probably cleaved by ACE. In terms of processing, processed by ACE to generate Met-enkephalin in the nucleus accumbens of the brain. The N-terminal domain contains 6 conserved cysteines thought to be involved in disulfide bonding and/or processing.

It is found in the cytoplasmic vesicle. The protein resides in the secretory vesicle. It localises to the chromaffin granule lumen. Its subcellular location is the secreted. In terms of biological role, neuropeptide that competes with and mimic the effects of opiate drugs. They play a role in a number of physiologic functions, including pain perception and responses to stress. Met-enkephalin-Arg-Phe neuropeptide acts as a strong ligand of Mu-type opioid receptor OPRM1. Met-enkephalin-Arg-Phe-binding to OPRM1 in the nucleus accumbens of the brain increases activation of OPRM1, leading to long-term synaptic depression of glutamate release. Its function is as follows. Increases glutamate release in the striatum and decreases GABA concentration in the striatum. Functionally, increases glutamate release in the striatum. In Cavia porcellus (Guinea pig), this protein is Proenkephalin-A (PENK).